We begin with the raw amino-acid sequence, 365 residues long: NAD(P)H-quinone oxidoreductase subunit 1, chloroplastic (365 aa).

Helical transmembrane passes span 27–47, 98–118, 129–149, 165–185, 203–223, 253–273, 302–322, and 345–365; these read VWIF…VLVI, FSIG…VIPF, IGIF…LMSG, AAQS…ISLL, FWGW…ISSL, FGLF…FVTI, IFGT…FLFI, and FLLP…LFSL.

The protein belongs to the complex I subunit 1 family. NDH is composed of at least 16 different subunits, 5 of which are encoded in the nucleus.

It localises to the plastid. The protein resides in the chloroplast thylakoid membrane. It carries out the reaction a plastoquinone + NADH + (n+1) H(+)(in) = a plastoquinol + NAD(+) + n H(+)(out). The enzyme catalyses a plastoquinone + NADPH + (n+1) H(+)(in) = a plastoquinol + NADP(+) + n H(+)(out). Functionally, NDH shuttles electrons from NAD(P)H:plastoquinone, via FMN and iron-sulfur (Fe-S) centers, to quinones in the photosynthetic chain and possibly in a chloroplast respiratory chain. The immediate electron acceptor for the enzyme in this species is believed to be plastoquinone. Couples the redox reaction to proton translocation, and thus conserves the redox energy in a proton gradient. The protein is NAD(P)H-quinone oxidoreductase subunit 1, chloroplastic of Arabis hirsuta (Hairy rock-cress).